The primary structure comprises 171 residues: S-ribosylhomocysteine lyase (171 aa).

Positions 54, 58, and 128 each coordinate Fe cation.

It belongs to the LuxS family. Homodimer. The cofactor is Fe cation.

The catalysed reaction is S-(5-deoxy-D-ribos-5-yl)-L-homocysteine = (S)-4,5-dihydroxypentane-2,3-dione + L-homocysteine. Its function is as follows. Involved in the synthesis of autoinducer 2 (AI-2) which is secreted by bacteria and is used to communicate both the cell density and the metabolic potential of the environment. The regulation of gene expression in response to changes in cell density is called quorum sensing. Catalyzes the transformation of S-ribosylhomocysteine (RHC) to homocysteine (HC) and 4,5-dihydroxy-2,3-pentadione (DPD). This is S-ribosylhomocysteine lyase from Enterobacter sp. (strain 638).